Consider the following 68-residue polypeptide: Conotoxin G1.9 (68 aa).

A signal peptide spans 1–21 (MGMRMMFTVFLLVVLATTVVS). A propeptide spanning residues 22–44 (FTSRRGPKSRRGEPVPTTVINYG) is cleaved from the precursor. Cystine bridges form between Cys46–Cys52 and Cys47–Cys61.

The protein belongs to the conotoxin A superfamily. In terms of tissue distribution, expressed by the venom duct.

The protein localises to the secreted. In terms of biological role, does not show activity on all the human nAChR subtypes studied. In Conus geographus (Geography cone), this protein is Conotoxin G1.9.